The following is a 586-amino-acid chain: Phosphomethylpyrimidine synthase (586 aa).

Residues 1–58 (MKQSVSAEQIELKSSLPGSKKVYVDGTREGMKVPMREIEQSDTNGVQNPPIRVYDTSG) form a disordered region. Over residues 22-39 (VYVDGTREGMKVPMREIE) the composition is skewed to basic and acidic residues. Residues N193, M222, Y251, H287, 307–309 (SRG), 348–351 (DGLR), and E387 each bind substrate. A Zn(2+)-binding site is contributed by H391. Residue Y414 participates in substrate binding. H455 lines the Zn(2+) pocket. 3 residues coordinate [4Fe-4S] cluster: C535, C538, and C543.

This sequence belongs to the ThiC family. The cofactor is [4Fe-4S] cluster.

The catalysed reaction is 5-amino-1-(5-phospho-beta-D-ribosyl)imidazole + S-adenosyl-L-methionine = 4-amino-2-methyl-5-(phosphooxymethyl)pyrimidine + CO + 5'-deoxyadenosine + formate + L-methionine + 3 H(+). It participates in cofactor biosynthesis; thiamine diphosphate biosynthesis. Catalyzes the synthesis of the hydroxymethylpyrimidine phosphate (HMP-P) moiety of thiamine from aminoimidazole ribotide (AIR) in a radical S-adenosyl-L-methionine (SAM)-dependent reaction. The sequence is that of Phosphomethylpyrimidine synthase from Bacillus mycoides (strain KBAB4) (Bacillus weihenstephanensis).